Consider the following 465-residue polypeptide: A-type ATP synthase subunit B (465 aa).

The protein belongs to the ATPase alpha/beta chains family. Has multiple subunits with at least A(3), B(3), C, D, E, F, H, I and proteolipid K(x).

The protein localises to the cell membrane. In terms of biological role, component of the A-type ATP synthase that produces ATP from ADP in the presence of a proton gradient across the membrane. The B chain is a regulatory subunit. This Pyrococcus horikoshii (strain ATCC 700860 / DSM 12428 / JCM 9974 / NBRC 100139 / OT-3) protein is A-type ATP synthase subunit B.